The primary structure comprises 429 residues: Argininosuccinate lyase (429 aa).

It belongs to the lyase 1 family. Argininosuccinate lyase subfamily.

The protein resides in the cytoplasm. The enzyme catalyses 2-(N(omega)-L-arginino)succinate = fumarate + L-arginine. Its pathway is amino-acid biosynthesis; L-arginine biosynthesis; L-arginine from L-ornithine and carbamoyl phosphate: step 3/3. The chain is Argininosuccinate lyase from Pyrobaculum aerophilum (strain ATCC 51768 / DSM 7523 / JCM 9630 / CIP 104966 / NBRC 100827 / IM2).